The sequence spans 548 residues: ETS domain-containing transcription factor ERF (548 aa).

Phosphothreonine is present on residues threonine 3 and threonine 7. Phosphoserine is present on residues serine 20 and serine 24. Residues 27-107 (IQLWHFILEL…KGKRFTYKFN (81 aa)) constitute a DNA-binding region (ETS). Disordered regions lie at residues 130 to 169 (QSAP…SSSS), 184 to 225 (GSVS…LARL), and 280 to 304 (SPTL…SHFS). Phosphoserine occurs at positions 185 and 190. The segment covering 289–301 (SGGGGPSGSGGGS) has biased composition (gly residues). Serine 327 is modified (phosphoserine). Residues 342–478 (PQRPDKCPLP…GEAPGASQCM (137 aa)) form a disordered region. Residues 348-361 (CPLPPMAPETPPVP) show a composition bias toward pro residues. Low complexity-rich tracts occupy residues 362–373 (SSASSSSSSSSS) and 394–403 (KAVAGADKSG). Phosphoserine is present on residues serine 431 and serine 435. The segment covering 431-451 (SEGESEEVEVTDISDEDEEDG) has biased composition (acidic residues). Threonine 441 is subject to Phosphothreonine. The residue at position 444 (serine 444) is a Phosphoserine. Glycyl lysine isopeptide (Lys-Gly) (interchain with G-Cter in SUMO2) cross-links involve residues lysine 465, lysine 481, and lysine 512. The segment at 492–548 (CRLEGGGGPAGGFEDEGEDKKVRGEGPGEAGGPLTPRRVSSDLQHATAQLSLEHRDS) is disordered. A Phosphothreonine; by MAPK1 modification is found at threonine 526. Residues serine 531, serine 532, and serine 548 each carry the phosphoserine modification. The segment covering 532–541 (SDLQHATAQL) has biased composition (polar residues).

This sequence belongs to the ETS family. Post-translationally, phosphorylated by multiple kinases including MAPK1/ERK2 at THR-526. Phosphorylation regulates the activity of ERF. Highest levels in testis, ovary, pancreas, and heart.

The protein resides in the nucleus. Functionally, potent transcriptional repressor that binds to the H1 element of the Ets2 promoter. May regulate other genes involved in cellular proliferation. Required for extraembryonic ectoderm differentiation, ectoplacental cone cavity closure, and chorioallantoic attachment. May be important for regulating trophoblast stem cell differentiation. In Homo sapiens (Human), this protein is ETS domain-containing transcription factor ERF (ERF).